The sequence spans 344 residues: Glycerol-3-phosphate dehydrogenase [NAD(P)+] (344 aa).

5 residues coordinate NADPH: serine 11, tryptophan 12, histidine 32, arginine 33, and lysine 105. Sn-glycerol 3-phosphate is bound by residues lysine 105, glycine 135, and serine 137. Alanine 139 provides a ligand contact to NADPH. Sn-glycerol 3-phosphate is bound by residues lysine 190, aspartate 243, serine 253, arginine 254, and asparagine 255. The active-site Proton acceptor is the lysine 190. An NADPH-binding site is contributed by arginine 254. Residues valine 278 and glutamate 280 each contribute to the NADPH site.

It belongs to the NAD-dependent glycerol-3-phosphate dehydrogenase family.

It is found in the cytoplasm. It catalyses the reaction sn-glycerol 3-phosphate + NAD(+) = dihydroxyacetone phosphate + NADH + H(+). It carries out the reaction sn-glycerol 3-phosphate + NADP(+) = dihydroxyacetone phosphate + NADPH + H(+). It participates in membrane lipid metabolism; glycerophospholipid metabolism. Catalyzes the reduction of the glycolytic intermediate dihydroxyacetone phosphate (DHAP) to sn-glycerol 3-phosphate (G3P), the key precursor for phospholipid synthesis. In Oceanobacillus iheyensis (strain DSM 14371 / CIP 107618 / JCM 11309 / KCTC 3954 / HTE831), this protein is Glycerol-3-phosphate dehydrogenase [NAD(P)+].